The sequence spans 372 residues: Hydrogenase-1 small chain (372 aa).

The tat-type signal signal peptide spans 1 to 45 (MNNEETFYQAMRRQGVTRRSFLKYCSLAATSLGLGAGMAPKIAWA). Residues 46–325 (LENKPRIPVV…PQMGTHSTAD (280 aa)) are Periplasmic-facing. Residues C62, C65, C160, C194, H232, C235, C260, and C266 each contribute to the [4Fe-4S] cluster site. Residues C275, C294, and C297 each coordinate [3Fe-4S] cluster. Residues 326 to 346 (TVGLTALGVVAAAVGVHAVAS) traverse the membrane as a helical segment. The interval 346-372 (SSVDQRRRHNQQPTETEHQPGNEDKQA) is disordered. Residues 347–372 (SVDQRRRHNQQPTETEHQPGNEDKQA) are Cytoplasmic-facing. Positions 360 to 372 (ETEHQPGNEDKQA) are enriched in basic and acidic residues.

The protein belongs to the [NiFe]/[NiFeSe] hydrogenase small subunit family. In terms of assembly, heterodimer of a large and a small subunit. [4Fe-4S] cluster is required as a cofactor. The cofactor is [3Fe-4S] cluster. In terms of processing, predicted to be exported by the Tat system. The position of the signal peptide cleavage has not been experimentally proven.

It is found in the cell inner membrane. It carries out the reaction H2 + A = AH2. This is one of three S.flexneri hydrogenases synthesized in response to different physiological conditions. HYD1 is believed to have a role in hydrogen cycling during fermentative growth. The chain is Hydrogenase-1 small chain (hyaA) from Shigella flexneri.